Consider the following 466-residue polypeptide: DNA polymerase delta subunit 3 (466 aa).

Position 2 is an N-acetylalanine (Ala2). Disordered regions lie at residues 145 to 218 and 255 to 466; these read PAES…KEVM and EQEV…FQRK. 3 stretches are compositionally biased toward basic and acidic residues: residues 205–218, 255–265, and 281–297; these read DANK…KEVM, EQEVKEEKKVE, and DLKK…MQQK. A Glycyl lysine isopeptide (Lys-Gly) (interchain with G-Cter in SUMO); alternate cross-link involves residue Lys259. A Glycyl lysine isopeptide (Lys-Gly) (interchain with G-Cter in SUMO2); alternate cross-link involves residue Lys259. Lys262 participates in a covalent cross-link: Glycyl lysine isopeptide (Lys-Gly) (interchain with G-Cter in SUMO2). Ser308 bears the Phosphoserine mark. Pro residues predominate over residues 350–360; it reads PSPPPPSPSPE. Phosphoserine occurs at positions 407 and 409. Thr411 carries the phosphothreonine modification. Ser413 is subject to Phosphoserine. Over residues 432-441 the composition is skewed to basic and acidic residues; it reads VKKEPKEERK. Lys433 participates in a covalent cross-link: Glycyl lysine isopeptide (Lys-Gly) (interchain with G-Cter in SUMO); alternate. A Glycyl lysine isopeptide (Lys-Gly) (interchain with G-Cter in SUMO2); alternate cross-link involves residue Lys433. The PIP-box signature appears at 456 to 463; the sequence is QVAITGFF.

As to quaternary structure, component of both the DNA polymerase delta and DNA polymerase zeta complexes. The tetrameric DNA polymerase delta complex (Pol-delta4), which consists of POLD1/p125, POLD2/p50, POLD3/p66/p68 and POLD4/p12, with POLD1 bearing DNA polymerase and 3' to 5' proofreading exonuclease activities. Within this complex, directly interacts with POLD2. Following stress caused by DNA damaging agents or by replication stress, POLD4 is degraded and Pol-delta4 is converted into a trimeric form of the complex (Pol-delta3), which consists of POLD1, POLD2 and POLD3. Pol-delta3 is the major form occurring at S phase replication sites, as well as DNA damage sites. Directly interacts with PCNA, as do POLD1 and POLD4; this interaction stimulates Pol-delta polymerase activity. Component of the DNA polymerase zeta complex (POLZ), which consists of REV3L, MAD2L2, POLD2 and POLD3, with REV3L bearing DNA polymerase catalytic activity. The DNA polymerase delta complex interacts with POLDIP2; this interaction is probably mediated through direct binding to POLD2. In terms of processing, ubiquitinated, but not targeted to the proteasome. Sumoylated. Sumoylation by SUMO3 may be predominant.

The protein resides in the cytoplasm. It localises to the nucleus. Its function is as follows. Accessory component of both the DNA polymerase delta complex and the DNA polymerase zeta complex. As a component of the trimeric and tetrameric DNA polymerase delta complexes (Pol-delta3 and Pol-delta4, respectively), plays a role in high fidelity genome replication, including in lagging strand synthesis, and repair. Required for optimal Pol-delta activity. Stabilizes the Pol-delta complex and plays a major role in Pol-delta stimulation by PCNA. Pol-delta3 and Pol-delta4 are characterized by the absence or the presence of POLD4. They exhibit differences in catalytic activity. Most notably, Pol-delta3 shows higher proofreading activity than Pol-delta4. Although both Pol-delta3 and Pol-delta4 process Okazaki fragments in vitro, Pol-delta3 may also be better suited to fulfill this task, exhibiting near-absence of strand displacement activity compared to Pol-delta4 and stalling on encounter with the 5'-blocking oligonucleotides. Pol-delta3 idling process may avoid the formation of a gap, while maintaining a nick that can be readily ligated. Along with DNA polymerase kappa, DNA polymerase delta carries out approximately half of nucleotide excision repair (NER) synthesis following UV irradiation. In this context, POLD3, along with PCNA and RFC1-replication factor C complex, is required to recruit POLD1, the catalytic subunit of the polymerase delta complex, to DNA damage sites. Under conditions of DNA replication stress, required for the repair of broken replication forks through break-induced replication (BIR). Involved in the translesion synthesis (TLS) of templates carrying O6-methylguanine or abasic sites performed by Pol-delta4, independently of DNA polymerase zeta (REV3L) or eta (POLH). Facilitates abasic site bypass by DNA polymerase delta by promoting extension from the nucleotide inserted opposite the lesion. Also involved in TLS, as a component of the tetrameric DNA polymerase zeta complex. Along with POLD2, dramatically increases the efficiency and processivity of DNA synthesis of the DNA polymerase zeta complex compared to the minimal zeta complex, consisting of only REV3L and REV7. The chain is DNA polymerase delta subunit 3 (POLD3) from Bos taurus (Bovine).